The chain runs to 249 residues: Caffeoyl-CoA O-methyltransferase (249 aa).

Residue lysine 21 coordinates substrate. S-adenosyl-L-methionine-binding positions include threonine 63, glutamate 85, 87–88, serine 93, aspartate 111, and alanine 140; that span reads GV. Aspartate 162 contacts substrate. Aspartate 162 provides a ligand contact to a divalent metal cation. Residue aspartate 164 participates in S-adenosyl-L-methionine binding. The a divalent metal cation site is built by aspartate 188 and asparagine 189. Asparagine 193 is a substrate binding site.

Belongs to the class I-like SAM-binding methyltransferase superfamily. Cation-dependent O-methyltransferase family. CCoAMT subfamily. As to quaternary structure, homodimer. A divalent metal cation is required as a cofactor.

The enzyme catalyses (E)-caffeoyl-CoA + S-adenosyl-L-methionine = (E)-feruloyl-CoA + S-adenosyl-L-homocysteine + H(+). It functions in the pathway aromatic compound metabolism; phenylpropanoid biosynthesis. In terms of biological role, methylates caffeoyl-CoA to feruloyl-CoA and 5-hydroxyferuloyl-CoA to sinapoyl-CoA. Plays a role in the synthesis of feruloylated polysaccharides. Involved in the reinforcement of the plant cell wall. Also involved in the responding to wounding or pathogen challenge by the increased formation of cell wall-bound ferulic acid polymers. The sequence is that of Caffeoyl-CoA O-methyltransferase from Eucalyptus gunnii (Cider gum).